The sequence spans 277 residues: Large ribosomal subunit protein uL2c (277 aa).

The disordered stretch occupies residues 226–249 (NPIDHPHGGGEGRAPIGREKPLTP). Positions 229-246 (DHPHGGGEGRAPIGREKP) are enriched in basic and acidic residues.

Belongs to the universal ribosomal protein uL2 family. As to quaternary structure, part of the 50S ribosomal subunit.

Its subcellular location is the plastid. It localises to the chloroplast. The sequence is that of Large ribosomal subunit protein uL2c (rpl2) from Physcomitrium patens (Spreading-leaved earth moss).